The primary structure comprises 150 residues: UPF0098 protein CT_736 (150 aa).

The protein belongs to the UPF0098 family.

The protein is UPF0098 protein CT_736 of Chlamydia trachomatis serovar D (strain ATCC VR-885 / DSM 19411 / UW-3/Cx).